The chain runs to 304 residues: Non-specific ribonucleoside hydrolase RihC (304 aa).

H233 is an active-site residue.

This sequence belongs to the IUNH family. RihC subfamily.

Hydrolyzes both purine and pyrimidine ribonucleosides with a broad-substrate specificity. This chain is Non-specific ribonucleoside hydrolase RihC, found in Escherichia coli O6:H1 (strain CFT073 / ATCC 700928 / UPEC).